We begin with the raw amino-acid sequence, 121 residues long: Large ribosomal subunit protein bL12 (121 aa).

This sequence belongs to the bacterial ribosomal protein bL12 family. As to quaternary structure, homodimer. Part of the ribosomal stalk of the 50S ribosomal subunit. Forms a multimeric L10(L12)X complex, where L10 forms an elongated spine to which 2 to 4 L12 dimers bind in a sequential fashion. Binds GTP-bound translation factors.

Its function is as follows. Forms part of the ribosomal stalk which helps the ribosome interact with GTP-bound translation factors. Is thus essential for accurate translation. The chain is Large ribosomal subunit protein bL12 from Streptococcus uberis (strain ATCC BAA-854 / 0140J).